Consider the following 159-residue polypeptide: Ankyrin repeat domain-containing protein 37 (159 aa).

3 ANK repeats span residues 1–25, 30–59, and 63–92; these read MLLL…SVNA, QEQS…DLNQ, and LGET…QIGV. Positions 130–150 match the Nuclear localization signal motif; it reads EQQERDPRAPVLRQKRSFRTV.

Ubiquitinated by the CRL2(FEM1B) complex, leading to its degradation. Expressed testis, ovary, uterus, kidney, liver, but not in other tissues.

The protein localises to the nucleus. It localises to the cytoplasm. This Mus musculus (Mouse) protein is Ankyrin repeat domain-containing protein 37.